An 88-amino-acid polypeptide reads, in one-letter code: Small ribosomal subunit protein bS20 (88 aa).

Disordered regions lie at residues 1–23 (MANS…HNAA) and 69–88 (PNKA…AMAA). Positions 69 to 81 (PNKAARHKSRLNT) are enriched in basic residues.

The protein belongs to the bacterial ribosomal protein bS20 family.

Binds directly to 16S ribosomal RNA. This is Small ribosomal subunit protein bS20 from Alcanivorax borkumensis (strain ATCC 700651 / DSM 11573 / NCIMB 13689 / SK2).